The sequence spans 377 residues: Apelin receptor (377 aa).

At 1–28 (MEDDGYNYYGADNQSECDYADWKPSGAL) the chain is on the extracellular side. Asparagine 13 carries N-linked (GlcNAc...) asparagine glycosylation. 2 cysteine pairs are disulfide-bonded: cysteine 17-cysteine 279 and cysteine 100-cysteine 179. The helical transmembrane segment at 29–52 (IPAIYMLVFLLGTTGNGLVLWTVF) threads the bilayer. Residues 53 to 62 (RTSREKRRSA) lie on the Cytoplasmic side of the membrane. The helical transmembrane segment at 63-84 (DIFIASLAVADLTFVVTLPLWA) threads the bilayer. Residues 85–97 (TYTYREFDWPFGT) lie on the Extracellular side of the membrane. The helical transmembrane segment at 98 to 123 (FSCKLSSYLIFVNMYASVFCLTGLSF) threads the bilayer. The Cytoplasmic segment spans residues 124 to 144 (DRYLAIVRPVANARLRLRVSG). Residues 145 to 162 (AVATAVLWVLAALLAVPV) form a helical membrane-spanning segment. Residues 163 to 196 (MVFRSTDASENGTKIQCYMDYSMVATSNSEWAWE) are Extracellular-facing. Asparagine 173 carries N-linked (GlcNAc...) asparagine glycosylation. Residues 197–221 (VGLGVSSTAVGFVVPFTIMLTCYFF) form a helical membrane-spanning segment. Residues 222-244 (IAQTIAGHFRKERIEGLRKRRRL) are Cytoplasmic-facing. A helical transmembrane segment spans residues 245-268 (LSIIVVLVVTFALCWMPYHLVKTL). Topologically, residues 269 to 287 (YMLGSLLHWPCDFDIFLMN) are extracellular. Residues 288–310 (VFPYCTCISYVNSCLNPFLYAFF) form a helical membrane-spanning segment. Topologically, residues 311 to 377 (DPRFRQACTS…IPYSQETLVD (67 aa)) are cytoplasmic. Residues 334-377 (HSSSAEKSASYSSGHSQGPGPNMGKGGEQMHEKSIPYSQETLVD) are disordered. The segment covering 335 to 349 (SSSAEKSASYSSGHS) has biased composition (low complexity).

The protein belongs to the G-protein coupled receptor 1 family. Homodimer; dimerization inhibits APLNR-mediated G protein and beta-arrestin signaling pathways compared to monomeric APLNR. In terms of tissue distribution, expressed in coronary endothelial cells (at protein level). Expressed in the embryo, allantoic and endothelial precursor cells of the yolk sac at 8 days post-coitum (dpc). Expressed in the secondary heart field and somite at 8.25 dpc. Expressed in fetal allantoic endothelial cells at 9 dpc. Expressed in the allantoid and the invading fetal vasculature of the placenta at 9.5 dpc. Expressed in endothelial cells adjacent to syncytiotrophoblast cells at 10.5 dpc. Expressed weakly in the embryonic heart at 11.5 dpc. Expressed in the adult heart. Expressed in endothelial cells and cardiomyocytes and weakly expressed in fibroblasts.

The protein resides in the cell membrane. In terms of biological role, g protein-coupled receptor for peptide hormones apelin (APLN) and apelin receptor early endogenous ligand (APELA), that plays a role in the regulation of normal cardiovascular function and fluid homeostasis. When acting as apelin receptor, activates both G(i) protein pathway that inhibits adenylate cyclase activity, and the beta-arrestin pathway leading to internalization of the receptor. APLNR/APJ receptor is also activated by mechanical strech in a G-protein-independent fashion to induce beta-arrestin signaling leading to cardiac hypertrophy. However, the presence of apelin ligand blunts cardiac hypertrophic induction from APLNR/APJ on response to pathological stimuli. Plays a key role in early development such as gastrulation, blood vessels formation and heart morphogenesis by acting as a receptor for APELA hormone. May promote angioblast migration toward the embryonic midline, i.e. the position of the future vessel formation, during vasculogenesis. Promotes sinus venosus (SV)-derived endothelial cells migration into the developing heart to promote coronary blood vessel development. Also plays a role in various processes in adults such as regulation of blood vessel formation, blood pressure and heart contractility and protection from cardiac hypertrophy and heart failure. The protein is Apelin receptor of Mus musculus (Mouse).